Consider the following 246-residue polypeptide: Putative protein phosphatase 2C-type (246 aa).

The PPM-type phosphatase domain maps to Lys2 to Asn240. Positions 36, 37, 192, and 231 each coordinate Mn(2+).

Mg(2+) is required as a cofactor. Requires Mn(2+) as cofactor.

The catalysed reaction is O-phospho-L-seryl-[protein] + H2O = L-seryl-[protein] + phosphate. The enzyme catalyses O-phospho-L-threonyl-[protein] + H2O = L-threonyl-[protein] + phosphate. In Streptococcus pyogenes serotype M6 (strain ATCC BAA-946 / MGAS10394), this protein is Putative protein phosphatase 2C-type.